The chain runs to 471 residues: Tyrosine--tRNA ligase, mitochondrial (471 aa).

Residue tyrosine 71 coordinates L-tyrosine. Aspartate 75 contacts ATP. Residues 76 to 85 (PTGDSLHVGH) carry the 'HIGH' region motif. The L-tyrosine site is built by aspartate 115, tyrosine 215, glutamine 219, aspartate 222, and glutamine 241. Residues isoleucine 268 and lysine 278 each coordinate ATP. Residues 275–279 (KLGKS) carry the 'KMSKS' region motif. Lysine 349 and lysine 361 each carry N6-acetyllysine.

It belongs to the class-I aminoacyl-tRNA synthetase family. In terms of assembly, homodimer.

The protein localises to the mitochondrion matrix. The catalysed reaction is tRNA(Tyr) + L-tyrosine + ATP = L-tyrosyl-tRNA(Tyr) + AMP + diphosphate + H(+). Its function is as follows. Catalyzes the attachment of tyrosine to tRNA(Tyr) in a two-step reaction: tyrosine is first activated by ATP to form Tyr-AMP and then transferred to the acceptor end of tRNA(Tyr). The chain is Tyrosine--tRNA ligase, mitochondrial (Yars2) from Rattus norvegicus (Rat).